The primary structure comprises 275 residues: Ribosomal RNA small subunit methyltransferase A (275 aa).

Residues N28, L30, G55, E77, D103, and N123 each coordinate S-adenosyl-L-methionine.

The protein belongs to the class I-like SAM-binding methyltransferase superfamily. rRNA adenine N(6)-methyltransferase family. RsmA subfamily.

It is found in the cytoplasm. The enzyme catalyses adenosine(1518)/adenosine(1519) in 16S rRNA + 4 S-adenosyl-L-methionine = N(6)-dimethyladenosine(1518)/N(6)-dimethyladenosine(1519) in 16S rRNA + 4 S-adenosyl-L-homocysteine + 4 H(+). Its function is as follows. Specifically dimethylates two adjacent adenosines (A1518 and A1519) in the loop of a conserved hairpin near the 3'-end of 16S rRNA in the 30S particle. May play a critical role in biogenesis of 30S subunits. The polypeptide is Ribosomal RNA small subunit methyltransferase A (Rhizobium etli (strain CIAT 652)).